A 223-amino-acid polypeptide reads, in one-letter code: 2-C-methyl-D-erythritol 4-phosphate cytidylyltransferase (223 aa).

Belongs to the IspD/TarI cytidylyltransferase family. IspD subfamily.

The catalysed reaction is 2-C-methyl-D-erythritol 4-phosphate + CTP + H(+) = 4-CDP-2-C-methyl-D-erythritol + diphosphate. The protein operates within isoprenoid biosynthesis; isopentenyl diphosphate biosynthesis via DXP pathway; isopentenyl diphosphate from 1-deoxy-D-xylulose 5-phosphate: step 2/6. In terms of biological role, catalyzes the formation of 4-diphosphocytidyl-2-C-methyl-D-erythritol from CTP and 2-C-methyl-D-erythritol 4-phosphate (MEP). This chain is 2-C-methyl-D-erythritol 4-phosphate cytidylyltransferase, found in Prochlorococcus marinus (strain MIT 9515).